We begin with the raw amino-acid sequence, 713 residues long: Segment polarity protein dishevelled homolog DVL-3 (713 aa).

Residues methionine 1 to aspartate 82 form the DIX domain. Polar residues-rich tracts occupy residues aspartate 87–aspartate 98 and histidine 118–asparagine 127. Residues aspartate 87–serine 235 are disordered. The segment covering alanine 140–threonine 155 has biased composition (basic and acidic residues). The span at glutamate 173 to phenylalanine 189 shows a compositional bias: low complexity. Positions arginine 199–serine 210 are enriched in polar residues. Residues leucine 212–alanine 225 show a composition bias toward basic residues. The 86-residue stretch at threonine 248 to alanine 333 folds into the PDZ domain. The region spanning proline 421 to aspartate 495 is the DEP domain. Over residues histidine 508–aspartate 518 the composition is skewed to polar residues. 2 disordered regions span residues histidine 508–glycine 527 and tyrosine 545–glycine 652. Residues glycine 564–serine 579 are compositionally biased toward low complexity. 2 stretches are compositionally biased toward basic and acidic residues: residues serine 580–aspartate 593 and glutamate 602–serine 618. A compositionally biased stretch (basic residues) spans histidine 629–histidine 646.

This sequence belongs to the DSH family.

It is found in the cytoplasm. In terms of biological role, involved in the signal transduction pathway mediated by multiple Wnt genes. Required during ciliogenesis for the docking of basal bodies to the apical plasma membrane. The protein is Segment polarity protein dishevelled homolog DVL-3 of Xenopus tropicalis (Western clawed frog).